The primary structure comprises 426 residues: DNA polymerase processivity factor component OPG148 (426 aa).

The protein belongs to the orthopoxvirus OPG148 family. Interacts with the DNA polymerase catalytic subunit OPG071. Interacts with UDG/OPG116. Component of the uracil-DNA glycosylase(UDG)-OPG148-polymerase complex; OPG148 and UDG form a heterodimeric processivity factor that associates with OPG071 to form the processive polymerase holoenzyme. Interacts with OPG117.

Functionally, plays an essential role in viral DNA replication by acting as the polymerase processivity factor together with protein OPG116. Serves as a bridge which links the DNA polymerase OPG071 and the uracil DNA glycosylase. This chain is DNA polymerase processivity factor component OPG148 (OPG148), found in Variola virus (isolate Human/India/Ind3/1967) (VARV).